The following is a 255-amino-acid chain: Thiazole synthase (255 aa).

The active-site Schiff-base intermediate with DXP is K95. Residues G156, 182 to 183 (AG), and 204 to 205 (NT) contribute to the 1-deoxy-D-xylulose 5-phosphate site.

Belongs to the ThiG family. As to quaternary structure, homotetramer. Forms heterodimers with either ThiH or ThiS.

It localises to the cytoplasm. It carries out the reaction [ThiS sulfur-carrier protein]-C-terminal-Gly-aminoethanethioate + 2-iminoacetate + 1-deoxy-D-xylulose 5-phosphate = [ThiS sulfur-carrier protein]-C-terminal Gly-Gly + 2-[(2R,5Z)-2-carboxy-4-methylthiazol-5(2H)-ylidene]ethyl phosphate + 2 H2O + H(+). It participates in cofactor biosynthesis; thiamine diphosphate biosynthesis. Catalyzes the rearrangement of 1-deoxy-D-xylulose 5-phosphate (DXP) to produce the thiazole phosphate moiety of thiamine. Sulfur is provided by the thiocarboxylate moiety of the carrier protein ThiS. In vitro, sulfur can be provided by H(2)S. The polypeptide is Thiazole synthase (Vibrio campbellii (strain ATCC BAA-1116)).